Here is a 378-residue protein sequence, read N- to C-terminus: UDP-4-amino-4-deoxy-L-arabinose--oxoglutarate aminotransferase (378 aa).

Lys-182 carries the post-translational modification N6-(pyridoxal phosphate)lysine.

Belongs to the DegT/DnrJ/EryC1 family. ArnB subfamily. As to quaternary structure, homodimer. The cofactor is pyridoxal 5'-phosphate.

The catalysed reaction is UDP-4-amino-4-deoxy-beta-L-arabinose + 2-oxoglutarate = UDP-beta-L-threo-pentopyranos-4-ulose + L-glutamate. Its pathway is nucleotide-sugar biosynthesis; UDP-4-deoxy-4-formamido-beta-L-arabinose biosynthesis; UDP-4-deoxy-4-formamido-beta-L-arabinose from UDP-alpha-D-glucuronate: step 2/3. It participates in bacterial outer membrane biogenesis; lipopolysaccharide biosynthesis. Catalyzes the conversion of UDP-4-keto-arabinose (UDP-Ara4O) to UDP-4-amino-4-deoxy-L-arabinose (UDP-L-Ara4N). The modified arabinose is attached to lipid A and is required for resistance to polymyxin and cationic antimicrobial peptides. This Aeromonas hydrophila subsp. hydrophila (strain ATCC 7966 / DSM 30187 / BCRC 13018 / CCUG 14551 / JCM 1027 / KCTC 2358 / NCIMB 9240 / NCTC 8049) protein is UDP-4-amino-4-deoxy-L-arabinose--oxoglutarate aminotransferase.